The sequence spans 323 residues: MQHQRNPQLNGQGELIHLLSIEGLPRDIVTHILDTAANFVSVNDREVKKVPLLRGKSVFNLFFENSTRTRTTFEIAAKRLSADVFNLDITRSSASKGESLLDTIANLSAMAADLFVVRHSESGAPYLIARHVAPHVHVINAGDGRHAHPTQGLLDLYTIRHYKKDFSQLTVAIVGDMLHSRVARSDIHGLITLGCAEVRAVGPRTLVPADMAQMGVRVCHQLQEGIEGADVIIMLRLQNERMSGALLSSSQEYFKSFGLTPEKLQLAKPDAIVMHPGPINRGVEIDSAVVDGRQSVILPQVGFGIAVRMAVMSIVAGNEACGH.

Positions 68 and 69 each coordinate carbamoyl phosphate. Residue lysine 96 coordinates L-aspartate. Arginine 118, histidine 148, and glutamine 151 together coordinate carbamoyl phosphate. L-aspartate contacts are provided by arginine 181 and arginine 236. Glycine 277 and proline 278 together coordinate carbamoyl phosphate.

Belongs to the aspartate/ornithine carbamoyltransferase superfamily. ATCase family. As to quaternary structure, heterododecamer (2C3:3R2) of six catalytic PyrB chains organized as two trimers (C3), and six regulatory PyrI chains organized as three dimers (R2).

It catalyses the reaction carbamoyl phosphate + L-aspartate = N-carbamoyl-L-aspartate + phosphate + H(+). It participates in pyrimidine metabolism; UMP biosynthesis via de novo pathway; (S)-dihydroorotate from bicarbonate: step 2/3. Its function is as follows. Catalyzes the condensation of carbamoyl phosphate and aspartate to form carbamoyl aspartate and inorganic phosphate, the committed step in the de novo pyrimidine nucleotide biosynthesis pathway. This is Aspartate carbamoyltransferase catalytic subunit from Verminephrobacter eiseniae (strain EF01-2).